The following is a 123-amino-acid chain: WAP four-disulfide core domain protein 5 (123 aa).

Positions 1 to 24 are cleaved as a signal peptide; the sequence is MRIQSLLLLGALLAVGSQPPAAFG. WAP domains lie at 27-73 and 74-121; these read KGEK…CVPR and VSVK…RDPV. Cystine bridges form between Cys-34/Cys-62, Cys-41/Cys-66, Cys-49/Cys-61, Cys-55/Cys-70, Cys-81/Cys-109, Cys-88/Cys-113, Cys-96/Cys-108, and Cys-102/Cys-117.

It is found in the secreted. Putative acid-stable proteinase inhibitor. The sequence is that of WAP four-disulfide core domain protein 5 (WFDC5) from Aotus nancymaae (Ma's night monkey).